Consider the following 617-residue polypeptide: tRNA uridine 5-carboxymethylaminomethyl modification enzyme MnmG (617 aa).

Residues 9–14 (GAGHAG), V121, and T176 each bind FAD. 269-283 (GPRYCPSIEDKFVRF) contributes to the NAD(+) binding site. Q366 is an FAD binding site.

It belongs to the MnmG family. Homodimer. Heterotetramer of two MnmE and two MnmG subunits. Requires FAD as cofactor.

Its subcellular location is the cytoplasm. In terms of biological role, NAD-binding protein involved in the addition of a carboxymethylaminomethyl (cmnm) group at the wobble position (U34) of certain tRNAs, forming tRNA-cmnm(5)s(2)U34. The protein is tRNA uridine 5-carboxymethylaminomethyl modification enzyme MnmG of Acholeplasma laidlawii (strain PG-8A).